Consider the following 399-residue polypeptide: Methylthioribose kinase (399 aa).

Residues asparagine 40, lysine 57, and 111-113 (EDL) contribute to the ATP site. Aspartate 229 serves as a coordination point for substrate. 246-248 (DAE) contributes to the ATP binding site. Arginine 344 contributes to the substrate binding site.

It belongs to the methylthioribose kinase family. As to quaternary structure, homodimer.

The catalysed reaction is 5-(methylsulfanyl)-D-ribose + ATP = 5-(methylsulfanyl)-alpha-D-ribose 1-phosphate + ADP + H(+). The protein operates within amino-acid biosynthesis; L-methionine biosynthesis via salvage pathway; S-methyl-5-thio-alpha-D-ribose 1-phosphate from S-methyl-5'-thioadenosine (hydrolase route): step 2/2. Catalyzes the phosphorylation of methylthioribose into methylthioribose-1-phosphate. The polypeptide is Methylthioribose kinase (Cronobacter sakazakii (strain ATCC BAA-894) (Enterobacter sakazakii)).